The primary structure comprises 325 residues: Tartrate-resistant acid phosphatase type 5 (325 aa).

The N-terminal stretch at 1 to 21 (MDTWTLLLVLHTSLLLPWAEG) is a signal peptide. Residues Asn116 and Asn147 are each glycosylated (N-linked (GlcNAc...) asparagine).

Exists either as monomer or, after proteolytic processing, as a dimer of two chains linked by disulfide bond(s). Fe cation serves as cofactor.

It is found in the lysosome. It carries out the reaction a phosphate monoester + H2O = an alcohol + phosphate. The chain is Tartrate-resistant acid phosphatase type 5 (ACP5) from Oryctolagus cuniculus (Rabbit).